Here is a 301-residue protein sequence, read N- to C-terminus: tRNA uridine(34) hydroxylase (301 aa).

In terms of domain architecture, Rhodanese spans 121 to 212 (NDKDTLVLDS…YLKNIKKKES (92 aa)). The Cysteine persulfide intermediate role is filled by cysteine 172.

It belongs to the TrhO family.

The enzyme catalyses uridine(34) in tRNA + AH2 + O2 = 5-hydroxyuridine(34) in tRNA + A + H2O. Its function is as follows. Catalyzes oxygen-dependent 5-hydroxyuridine (ho5U) modification at position 34 in tRNAs. The protein is tRNA uridine(34) hydroxylase of Pelagibacter ubique (strain HTCC1062).